Reading from the N-terminus, the 483-residue chain is MDNQTVAAIWSCASATCLSLDAKRHSVETNTNDRQAPPGLSNSNNNNNNNKSTAVDADPRKLRHIAHTPRGSCFMALLLLLLLALNFRHAHSCGPGRGLGRRRERNLYPLVLKQTVPNLSEYMSGASGPIEGVIQRDSPNFKDLVPNYNRDIIFRDEEGTGADRLMSKRCREKLNTLSYSVMNEWPGVRLLVTESWDEDHQHGQESLHYEGRAVTIATSDRDQSKYGMLARLAVEAGFDWVSYVSRRHIYCSVKSDSSPFISHVHGCFTPESTALLESGAKKPLSELAIGDRVLSMNGKGQAVYSEVILFMDRNLEQMQNFVQLHTDSGAVLTVTPAHLITVWQPEREALDFVFADRVEELNYVLVHDATGELRPHRVIRVSSVRSRGVVAPLTREGTIVVDSVAASCYAVISSQSLAHWGLAPMRLLYTLQSWMPAKGQLRTAQDKSTPKDATAQQQNGLHWYANALYKVKDYVLPQSWRHD.

The first 19 residues, 1–19 (MDNQTVAAIWSCASATCLS), serve as a signal peptide directing secretion. Positions 20–92 (LDAKRHSVET…LALNFRHAHS (73 aa)) are excised as a propeptide. A disordered region spans residues 28 to 57 (ETNTNDRQAPPGLSNSNNNNNNNKSTAVDA). The segment covering 41–50 (SNSNNNNNNN) has biased composition (low complexity). Cys-93 is lipidated: N-palmitoyl cysteine. Ca(2+) is bound by residues Glu-157, Glu-158, Asp-163, Thr-193, Glu-194, Asp-197, and Asp-199. Gly-266 carries Cholesterol glycine ester lipidation.

The protein belongs to the hedgehog family. As to quaternary structure, interacts with shf. In terms of processing, the C-terminal part of the hedgehog protein precursor displays an autoproteolysis activity that results in the cleavage of the full-length protein into two parts (N-product and C-product). In addition, the C-terminal part displays a cholesterol transferase activity that results by the covalent attachment of a cholesterol moiety to the C-terminal of the newly generated N-product. The N-product is the active species in both local and long-range signaling, whereas the C-product has no signaling activity. Cholesterylation is required for N-product targeting to lipid rafts and multimerization. Post-translationally, N-palmitoylation by Rasp of the hedgehog N-product, within the secretory pathway, is required for the embryonic and larval patterning activities of the hedgehog signal.

The protein resides in the nucleus. It is found in the cytoplasm. It localises to the cell membrane. The enzyme catalyses glycyl-L-cysteinyl-[protein] + cholesterol + H(+) = [protein]-C-terminal glycyl cholesterol ester + N-terminal L-cysteinyl-[protein]. Its function is as follows. The C-terminal part of the hedgehog protein precursor displays an autoproteolysis activity that results in the cleavage of the full-length protein into two parts (N-product and C-product). In addition, the C-terminal part displays a cholesterol transferase activity that results by the covalent attachment of a cholesterol moiety to the C-terminal of the newly generated N-product. Once cleaved, the C-product has no signaling activity and diffuses from the cell. The dually lipidated hedgehog protein N-product is a morphogen which is essential for a variety of patterning events during development. Establishes the anterior-posterior axis of the embryonic segments and patterns the larval imaginal disks. Binds to the patched (ptc) receptor, which functions in association with smoothened (smo), to activate the transcription of target genes wingless (wg), decapentaplegic (dpp) and ptc. In the absence of hh, ptc represses the constitutive signaling activity of smo through fused (fu). Essential component of a signaling pathway which regulates the Duox-dependent gut immune response to bacterial uracil; required to activate Cad99C-dependent endosome formation, norpA-dependent Ca2+ mobilization and p38 MAPK, which are essential steps in the Duox-dependent production of reactive oxygen species (ROS) in response to intestinal bacterial infection. During photoreceptor differentiation, it up-regulates transcription of Ubr3, which in turn promotes the hh-signaling pathway by mediating the ubiquitination and degradation of cos. The chain is Protein hedgehog from Drosophila virilis (Fruit fly).